The chain runs to 431 residues: Ornithine aminotransferase, mitochondrial (431 aa).

Position 286 is an N6-(pyridoxal phosphate)lysine (Lys-286).

This sequence belongs to the class-III pyridoxal-phosphate-dependent aminotransferase family. In terms of assembly, homotetramer. Pyridoxal 5'-phosphate serves as cofactor.

It localises to the mitochondrion matrix. It catalyses the reaction a 2-oxocarboxylate + L-ornithine = L-glutamate 5-semialdehyde + an L-alpha-amino acid. Its pathway is amino-acid biosynthesis; L-proline biosynthesis; L-glutamate 5-semialdehyde from L-ornithine: step 1/1. This Drosophila melanogaster (Fruit fly) protein is Ornithine aminotransferase, mitochondrial (Oat).